Consider the following 460-residue polypeptide: MTMIFPKGFMFGTATAAYQIEGAVAEGGRTPSIWDTFSHTGHTLNGDTGDVADDFYHRWEDDLKLLRDLGVNAYRFSIGIPRVIPTPDGKPNQEGLDFYSRIVDRLLEYGIAPIVTLYHWDLPQYMASGDGREGGWLERETAYRIADYAGIVAKCLGDRVHTYTTLNEPWCSAHLSYGGTEHAPGLGAGPLAFRAAHHLNLAHGLMCEAVRAEAGAKPGLSVTLNLQICRGDADAVHRVDLIGNRVFLDPMLRGRYPDELFSITKGICDWGFVCDGDLDLIHQPIDVLGLNYYSTNLVKMSDRPQFPQSTEASTAPGASDVDWLPTAGPHTEMGWNIDPDALYETLVRLNDNYPGMPLVVTENGMACPDKVEVGTDGVKMVHDNDRIDYLRRHLEAVYRAIEEGTDVRGYFAWSLMDNFEWAFGYSKRFGLTYVDYESQERVKKDSFDWYRRFIADHSAR.

The active-site Proton donor is the glutamate 168. Catalysis depends on glutamate 362, which acts as the Nucleophile.

This sequence belongs to the glycosyl hydrolase 1 family. Monomer.

It is found in the secreted. The enzyme catalyses Hydrolysis of terminal, non-reducing beta-D-glucosyl residues with release of beta-D-glucose.. It carries out the reaction Hydrolysis of terminal non-reducing beta-D-fucose residues in beta-D-fucosides.. Inhibited by Cu(2+), Ag(+) and Hg(+), but not by other cations such as Mg(2+), Ca(2+), Mn(2+) and Co(2+). Inhibited by 1-amino-1-deoxy-D-glucose and p-chloromercuribenzoic acid, but not by EDTA or dithiothreitol. Inhibited by the disaccharides sucrose, lactose and cellobiose. The monosaccharides D-fructose, D-mannose, D-xylose and D-glucose increase the beta-D-fucosidase activity, but not the beta-D-glucosidase activity. D-glucose inhibits the beta-D-glucosidase activity, but promotes the beta-D-fucosidase activity. D-fucose inhibits the beta-D-glucosidase activity and does not significantly affect the beta-D-fucosidase activity. Functionally, bifunctional beta-D-glucosidase/beta-D-fucosidase. Activity towards pNP-beta-D-fucoside is about 80-85% of the activity towards pNP-beta-D-glucoside. Also has slight activity (less than 10%) towards pNP-beta-D-galactoside, and very low activity (less than 1%) towards pNP-beta-D-xyloside. Hydrolyzes laminaribiose, sophorose, cellobiose and gentobiose. Not active against maltose, pNP-alpha-D-glucoside or pNP-beta-L-fucoside. The polypeptide is Bifunctional beta-D-glucosidase/beta-D-fucosidase (Bifidobacterium breve).